The sequence spans 413 residues: MAP kinase-interacting serine/threonine-protein kinase 1 (413 aa).

The tract at residues 1–26 (MGSSEPLPIVDSDKRRKKKRKTRATD) is disordered. Phosphothreonine; by PAK2 is present on T22. Phosphoserine; by PAK2 is present on S27. A Protein kinase domain is found at 37-321 (QLTSELLGEG…AAQVLQHPWV (285 aa)). Residues 43-51 (LGEGAYAKV) and K66 each bind ATP. The Proton acceptor role is filled by D158. Phosphoserine is present on residues S168 and S173. Phosphothreonine occurs at positions 197, 202, and 332.

This sequence belongs to the protein kinase superfamily. CAMK Ser/Thr protein kinase family. As to quaternary structure, interacts with the C-terminal regions of EIF4G1 and EIF4G2. Also binds to dephosphorylated ERK1 and ERK2, and to the p38 kinases. It depends on Mg(2+) as a cofactor. Post-translationally, dual phosphorylation of Thr-197 and Thr-202 activates the kinase. Phosphorylation of Thr-332 activates the kinase. MAPK3/ERK1 is one of the kinases which activate MKNK1/MNK1. Phosphorylation by PAK2 leads to a reduced phosphorylation of EIF4G1.

The catalysed reaction is L-seryl-[protein] + ATP = O-phospho-L-seryl-[protein] + ADP + H(+). It carries out the reaction L-threonyl-[protein] + ATP = O-phospho-L-threonyl-[protein] + ADP + H(+). Phosphorylated and activated by the p38 kinases and kinases in the Erk pathway. Its function is as follows. May play a role in the response to environmental stress and cytokines. Appears to regulate translation by phosphorylating EIF4E, thus increasing the affinity of this protein for the 7-methylguanosine-containing mRNA cap. In Rattus norvegicus (Rat), this protein is MAP kinase-interacting serine/threonine-protein kinase 1 (Mknk1).